Consider the following 322-residue polypeptide: MGTNTIRAFIILYLLAVCGCVEYDVDNNVQICTCANVSHINHTFWYYNNKVIALATEDRTSGYISSFIKRVNISLTCLNISSLRYEDSGSYKGVSHLKDGVIVTTTMNISVKANIIDLTGRVCYLTRNYCEVKIRCEIKSFALNGSITPLHMILGTLDRWKYLPFPTDDYRYVGELKRYISGNPYPIESLALEISATFNRFTIVKNNDDEFSCYLFSQNYSFHKMLNARHICESEWEALNNNNDNSSSMPVSHNNRANDLSSMMSQLQNDNDDNNDYSAPMNINNLIMIVLITMLSIIIIIIVVIAIIAMYKRSKYSHIDDN.

An N-terminal signal peptide occupies residues 1–20; sequence MGTNTIRAFIILYLLAVCGC. Asn-36, Asn-41, Asn-72, Asn-79, Asn-108, Asn-144, Asn-219, and Asn-245 each carry an N-linked (GlcNAc...) asparagine; by host glycan. The chain crosses the membrane as a helical span at residues 287-307; the sequence is IMIVLITMLSIIIIIIVVIAI.

The protein belongs to the orthopoxvirus OPG049 family.

It is found in the host cell membrane. Plays a role in the spread of virus to neighboring cells ex vivo. The protein is Protein OPG049 (OPG049) of Homo sapiens (Human).